Reading from the N-terminus, the 124-residue chain is Small ribosomal subunit protein uS13c (124 aa).

The disordered stretch occupies residues 100-124 (GQRTRTNARTRKGKVKTAVAKKKGR). Over residues 101–124 (QRTRTNARTRKGKVKTAVAKKKGR) the composition is skewed to basic residues.

It belongs to the universal ribosomal protein uS13 family. Part of the 30S ribosomal subunit.

The protein localises to the plastid. It localises to the chloroplast. Its function is as follows. Located at the top of the head of the 30S subunit, it contacts several helices of the 16S rRNA. This Emiliania huxleyi (Coccolithophore) protein is Small ribosomal subunit protein uS13c.